Consider the following 148-residue polypeptide: Glutamate mutase sigma subunit (148 aa).

Residues 3-140 (NPTIVIGVIG…KRDIERVMQS (138 aa)) enclose the B12-binding domain. Adenosylcob(III)alamin-binding positions include 13–17 (ADCHA), His16, 61–63 (SSI), and 93–97 (NLVIG).

Belongs to the methylaspartate mutase GlmS subunit family. In terms of assembly, heterotetramer composed of 2 epsilon subunits (GlmE) and 2 sigma subunits (GlmS). GlmE exists as a homodimer and GlmS as a monomer. Adenosylcob(III)alamin serves as cofactor.

The enzyme catalyses (2S,3S)-3-methyl-L-aspartate = L-glutamate. It participates in amino-acid degradation; L-glutamate degradation via mesaconate pathway; acetate and pyruvate from L-glutamate: step 1/4. Catalyzes the carbon skeleton rearrangement of L-glutamate to L-threo-3-methylaspartate ((2S,3S)-3-methylaspartate). This Yersinia enterocolitica serotype O:8 / biotype 1B (strain NCTC 13174 / 8081) protein is Glutamate mutase sigma subunit.